The following is a 1036-amino-acid chain: Protein translocase subunit SecA, chloroplastic (1036 aa).

The transit peptide at 1–76 (MESCARSASQ…KIGELMQVRA (76 aa)) directs the protein to the chloroplast. 186–193 (MRTGEGKT) lines the ATP pocket. Positions 995–1036 (NQEQQQKGKPDSSNVENKRIGDANLNPVSVTESPSSDSPQNT) are disordered. The span at 1000–1015 (QKGKPDSSNVENKRIG) shows a compositional bias: basic and acidic residues. Residues 1020-1036 (NPVSVTESPSSDSPQNT) show a composition bias toward polar residues.

The protein belongs to the SecA family.

Its subcellular location is the plastid. The protein localises to the chloroplast stroma. The protein resides in the chloroplast thylakoid membrane. The enzyme catalyses ATP + H2O + chloroplast-proteinSide 1 = ADP + phosphate + chloroplast-proteinSide 2.. Its function is as follows. Has a central role in coupling the hydrolysis of ATP to the transfer of proteins across the thylakoid membrane. The chain is Protein translocase subunit SecA, chloroplastic from Spinacia oleracea (Spinach).